The primary structure comprises 433 residues: Enolase (433 aa).

Glutamine 167 is a (2R)-2-phosphoglycerate binding site. Glutamate 209 (proton donor) is an active-site residue. Mg(2+) is bound by residues aspartate 246, glutamate 291, and aspartate 318. An N6-acetyllysine modification is found at lysine 326. (2R)-2-phosphoglycerate is bound by residues lysine 343, arginine 372, serine 373, and lysine 394. Lysine 343 functions as the Proton acceptor in the catalytic mechanism. Position 343 is an N6-(2-hydroxyisobutyryl)lysine (lysine 343).

This sequence belongs to the enolase family. As to quaternary structure, component of the RNA degradosome, a multiprotein complex involved in RNA processing and mRNA degradation. Mg(2+) is required as a cofactor. In terms of processing, acetylated and 2-hydroxyisobutyrylated at Lys-326 and Lys-343, respectively, reducing the enolase activity. Deacetylated and de-2-hydroxyisobutyrylated by NpdA/CobB, increasing the enolase activity.

It is found in the cytoplasm. It localises to the secreted. The protein localises to the cell surface. The enzyme catalyses (2R)-2-phosphoglycerate = phosphoenolpyruvate + H2O. Its pathway is carbohydrate degradation; glycolysis; pyruvate from D-glyceraldehyde 3-phosphate: step 4/5. Catalyzes the reversible conversion of 2-phosphoglycerate (2-PG) into phosphoenolpyruvate (PEP). It is essential for the degradation of carbohydrates via glycolysis. This chain is Enolase, found in Proteus mirabilis (strain HI4320).